We begin with the raw amino-acid sequence, 191 residues long: Lipid A 1-phosphatase (191 aa).

5 consecutive transmembrane segments (helical) span residues 22-42 (LLAL…PKVP), 60-80 (FIPT…VGLF), 117-137 (GNFN…AFLM), 145-162 (YLWL…RIYL), and 164-184 (MHTI…VGLF).

The protein belongs to the lipid A LpxE 1-phosphatase family.

The protein localises to the cell inner membrane. The protein operates within bacterial outer membrane biogenesis; LPS lipid A biosynthesis. In terms of biological role, removes the 1-phosphate group from tetra- and probably hexaacylated lipid A species. Absence of the 1-phosphate group renders the bacteria partially resistant to host-derived cationic antimicrobial peptides (CAMP), allowing it to camouflage itself from the host innate immune response, and plays a role in the long-term colonization of the host's stomach. This chain is Lipid A 1-phosphatase, found in Helicobacter pylori (strain J99 / ATCC 700824) (Campylobacter pylori J99).